The primary structure comprises 207 residues: Ribonuclease HII (207 aa).

The 191-residue stretch at 17–207 (RIVAGVDEVG…SFKPLAAFVD (191 aa)) folds into the RNase H type-2 domain. A divalent metal cation is bound by residues Asp-23, Glu-24, and Asp-120.

Belongs to the RNase HII family. The cofactor is Mn(2+). Requires Mg(2+) as cofactor.

The protein localises to the cytoplasm. The catalysed reaction is Endonucleolytic cleavage to 5'-phosphomonoester.. Endonuclease that specifically degrades the RNA of RNA-DNA hybrids. In Herpetosiphon aurantiacus (strain ATCC 23779 / DSM 785 / 114-95), this protein is Ribonuclease HII.